The sequence spans 341 residues: Protein phosphatase methylesterase 1 (341 aa).

The tract at residues 1-24 (MAFRKEELSQTLYENESEQSSETK) is disordered. Residues 9 to 20 (SQTLYENESEQS) show a composition bias toward polar residues. Catalysis depends on residues S153, D178, and H304.

This sequence belongs to the AB hydrolase superfamily.

The catalysed reaction is [phosphatase 2A protein]-C-terminal L-leucine methyl ester + H2O = [phosphatase 2A protein]-C-terminal L-leucine + methanol + H(+). In terms of biological role, demethylates proteins that have been reversibly carboxymethylated. Demethylates the phosphatase PP2A catalytic subunit. In Schizosaccharomyces pombe (strain 972 / ATCC 24843) (Fission yeast), this protein is Protein phosphatase methylesterase 1 (ppe1).